The primary structure comprises 269 residues: Shikimate dehydrogenase (NADP(+)) (269 aa).

Shikimate-binding positions include 17–19 (SKS) and threonine 64. Lysine 68 serves as the catalytic Proton acceptor. Glutamate 80 is an NADP(+) binding site. Shikimate-binding residues include asparagine 89 and aspartate 105. NADP(+) is bound by residues 130 to 134 (GAGGA), 154 to 159 (NRTHTK), and methionine 213. Position 215 (tyrosine 215) interacts with shikimate. Glycine 237 is a binding site for NADP(+).

The protein belongs to the shikimate dehydrogenase family. Homodimer.

The catalysed reaction is shikimate + NADP(+) = 3-dehydroshikimate + NADPH + H(+). It functions in the pathway metabolic intermediate biosynthesis; chorismate biosynthesis; chorismate from D-erythrose 4-phosphate and phosphoenolpyruvate: step 4/7. Its function is as follows. Involved in the biosynthesis of the chorismate, which leads to the biosynthesis of aromatic amino acids. Catalyzes the reversible NADPH linked reduction of 3-dehydroshikimate (DHSA) to yield shikimate (SA). This Neisseria mucosa protein is Shikimate dehydrogenase (NADP(+)).